We begin with the raw amino-acid sequence, 909 residues long: Epithelial discoidin domain-containing receptor 1 (909 aa).

The N-terminal stretch at 1–18 is a signal peptide; the sequence is MGPEALSSLLLLLLVASG. Topologically, residues 21 to 413 are extracellular; the sequence is DMKGHFDPAK…VAKAEGSPTA (393 aa). An F5/8 type C domain is found at 31–181; the sequence is CRYALGMQDR…VCLRVELYGC (151 aa). Cystine bridges form between cysteine 31–cysteine 181 and cysteine 70–cysteine 173. The segment covering 45–60 has biased composition (low complexity); that stretch reads SDISASSSWSDSTAAR. The tract at residues 45-65 is disordered; that stretch reads SDISASSSWSDSTAARHSSDG. Residues 188–363 are DS-like domain; that stretch reads LSYTAPVGQT…LFSEISFISD (176 aa). 6 residues coordinate Ca(2+): asparagine 207, glutamine 226, aspartate 229, valine 231, tyrosine 249, and tyrosine 251. Asparagine 207 carries N-linked (GlcNAc...) asparagine glycosylation. Residue asparagine 256 is glycosylated (N-linked (GlcNAc...) asparagine). Cysteine 299 and cysteine 344 are disulfide-bonded. Serine 356 and glutamate 357 together coordinate Ca(2+). N-linked (GlcNAc...) asparagine glycans are attached at residues asparagine 366 and asparagine 390. Residues 414–434 traverse the membrane as a helical segment; sequence ILIGCLVAIILLLLLIIALML. Residues 435–909 are Cytoplasmic-facing; the sequence is WRLHWRRLLS…FLAEDALNTV (475 aa). The tract at residues 466-495 is disordered; that stretch reads ILINNRPGPREPPPYQEPRPRGNPPHSAPC. Residues 475 to 492 are compositionally biased toward pro residues; it reads REPPPYQEPRPRGNPPHS. The short motif at 477-480 is the PPxY motif element; it reads PPPY. Tyrosine 480, tyrosine 509, and tyrosine 516 each carry phosphotyrosine; by autocatalysis. Positions 606 to 901 constitute a Protein kinase domain; that stretch reads LRFKEKLGEG…PPFSQLHRFL (296 aa). Residue 612–620 participates in ATP binding; the sequence is LGEGQFGEV. A Phosphoserine modification is found at serine 627. Lysine 651 is a binding site for ATP. At tyrosine 736 the chain carries Phosphotyrosine; by autocatalysis. Residue aspartate 762 is the Proton acceptor of the active site. Tyrosine 788, tyrosine 792, and tyrosine 793 each carry phosphotyrosine; by autocatalysis.

This sequence belongs to the protein kinase superfamily. Tyr protein kinase family. Insulin receptor subfamily. In terms of assembly, homodimer. Interacts (via PPxY motif) with WWC1 (via WW domains) in a collagen-regulated manner. Forms a tripartite complex with WWC1 and PRKCZ, but predominantly in the absence of collagen. Interacts (tyrosine phosphorylated) with SHC1. Interacts with SRC. Interacts with MYH9. Interacts with CDH1. Interacts with PTPN11. Interacts with NCK2. Autophosphorylated in response to fibrillar collagen binding.

It is found in the cell membrane. The enzyme catalyses L-tyrosyl-[protein] + ATP = O-phospho-L-tyrosyl-[protein] + ADP + H(+). Functionally, tyrosine kinase that functions as a cell surface receptor for fibrillar collagen and regulates cell attachment to the extracellular matrix, remodeling of the extracellular matrix, cell migration, differentiation, survival and cell proliferation. Collagen binding triggers a signaling pathway that involves SRC and leads to the activation of MAP kinases. Regulates remodeling of the extracellular matrix by up-regulation of the matrix metalloproteinases MMP2, MMP7 and MMP9, and thereby facilitates cell migration and wound healing. Promotes smooth muscle cell migration, and thereby contributes to arterial wound healing. Also plays a role in tumor cell invasion. Phosphorylates PTPN11. Required for normal blastocyst implantation during pregnancy, for normal mammary gland differentiation and normal lactation. Required for normal ear morphology and normal hearing. The protein is Epithelial discoidin domain-containing receptor 1 (DDR1) of Pan troglodytes (Chimpanzee).